The following is a 377-amino-acid chain: 23S rRNA (uracil(747)-C(5))-methyltransferase RlmC (377 aa).

Residues C3, C11, C14, and C87 each contribute to the [4Fe-4S] cluster site. S-adenosyl-L-methionine contacts are provided by Q212, F241, E262, and N307. C334 functions as the Nucleophile in the catalytic mechanism.

It belongs to the class I-like SAM-binding methyltransferase superfamily. RNA M5U methyltransferase family. RlmC subfamily.

The catalysed reaction is uridine(747) in 23S rRNA + S-adenosyl-L-methionine = 5-methyluridine(747) in 23S rRNA + S-adenosyl-L-homocysteine + H(+). Functionally, catalyzes the formation of 5-methyl-uridine at position 747 (m5U747) in 23S rRNA. The polypeptide is 23S rRNA (uracil(747)-C(5))-methyltransferase RlmC (Xenorhabdus bovienii (strain SS-2004) (Xenorhabdus nematophila subsp. bovienii)).